The primary structure comprises 375 residues: Growth/differentiation factor 8 (375 aa).

An N-terminal signal peptide occupies residues 1–18 (MQKLQIFVYIYLFMLLVA). Positions 19-266 (GPVDLNENSE…VTDTPKRSRR (248 aa)) are excised as a propeptide. Asn-48 and Asn-71 each carry an N-linked (GlcNAc...) asparagine glycan. 4 cysteine pairs are disulfide-bonded: Cys-272–Cys-282, Cys-281–Cys-340, Cys-309–Cys-372, and Cys-313–Cys-374.

Belongs to the TGF-beta family. Homodimer; disulfide-linked. Interacts with WFIKKN2, leading to inhibit its activity. Interacts with FSTL3. Post-translationally, synthesized as large precursor molecule that undergoes proteolytic cleavage to generate an N-terminal propeptide and a disulfide linked C-terminal dimer, which is the biologically active molecule. The circulating form consists of a latent complex of the C-terminal dimer and other proteins, including its propeptide, which maintain the C-terminal dimer in a latent, inactive state. Ligand activation requires additional cleavage of the prodomain by a tolloid-like metalloproteinase.

It localises to the secreted. Its function is as follows. Acts specifically as a negative regulator of skeletal muscle growth. This chain is Growth/differentiation factor 8 (MSTN), found in Capra ibex (Ibex).